Here is a 21-residue protein sequence, read N- to C-terminus: Brevinin-2-related peptide (21 aa).

Residue Leu-21 is modified to Leucine amide.

In terms of tissue distribution, expressed by the skin glands.

The protein localises to the secreted. Functionally, antimicrobial peptide with activity against Gram-negative and Gram-positive bacteria (MIC=13 uM against E.coli, MIC=25 uM against S.aureus) and fungi (MIC=25 uM against C.albicans). Also shows hemolytic activity (HC(50)=50 uM). In vitro, shows moderate inhibitory activity against HIV. In Lithobates septentrionalis (Mink frog), this protein is Brevinin-2-related peptide.